The primary structure comprises 112 residues: DNA-directed RNA polymerase subunit Rpo11 (112 aa).

This sequence belongs to the archaeal Rpo11/eukaryotic RPB11/RPC19 RNA polymerase subunit family. In terms of assembly, part of the RNA polymerase complex.

It is found in the cytoplasm. It catalyses the reaction RNA(n) + a ribonucleoside 5'-triphosphate = RNA(n+1) + diphosphate. Its function is as follows. DNA-dependent RNA polymerase (RNAP) catalyzes the transcription of DNA into RNA using the four ribonucleoside triphosphates as substrates. This Methanopyrus kandleri (strain AV19 / DSM 6324 / JCM 9639 / NBRC 100938) protein is DNA-directed RNA polymerase subunit Rpo11.